A 114-amino-acid polypeptide reads, in one-letter code: UPF0145 protein PF1756 (114 aa).

This sequence belongs to the UPF0145 family.

This Pyrococcus furiosus (strain ATCC 43587 / DSM 3638 / JCM 8422 / Vc1) protein is UPF0145 protein PF1756.